Here is a 121-residue protein sequence, read N- to C-terminus: uncharacterized protein (121 aa).

This is an uncharacterized protein from Aquifex aeolicus (strain VF5).